The primary structure comprises 691 residues: Dipeptidyl-peptidase 5 (691 aa).

The N-terminal stretch at 1–20 is a signal peptide; that stretch reads MKRTILSLLAAVSLAIPVYA. Catalysis depends on charge relay system residues Ser549, Asp634, and His666.

The protein belongs to the peptidase S9C family. As to quaternary structure, homodimer.

It is found in the periplasm. Catalyzes the removal of dipeptides from the N-terminus of oligopeptides. Prefers Ala and hydrophobic residues at the P1 position, and has no preference for P2 residues. Shows the highest dipeptidyl peptidase activity toward the synthetic substrate Lys-Ala-methylcoumaryl-7-amide (Lys-Ala-MCA). Is likely involved in amino acid metabolism and bacterial growth/survival of asaccharolytic P.endodontalis, that utilizes amino acids from extracellular proteinaceous nutrients as energy and carbon sources. The sequence is that of Dipeptidyl-peptidase 5 from Porphyromonas endodontalis (strain ATCC 35406 / DSM 24491 / JCM 8526 / CCUG 16442 / BCRC 14492 / NCTC 13058 / HG 370) (Bacteroides endodontalis).